We begin with the raw amino-acid sequence, 350 residues long: Ion-translocating oxidoreductase complex subunit D (350 aa).

Transmembrane regions (helical) follow at residues 37-57 (YYFG…AYLA), 78-109 (ALVT…IVIV), 124-144 (AMAA…SWVA), and 158-178 (TFNS…HLAI). Threonine 185 is modified (FMN phosphoryl threonine). The next 5 helical transmembrane spans lie at 212-232 (SVGE…LVML), 239-259 (WHIS…GFLI), 264-284 (FVSP…FFIA), 298-318 (LIFG…GGYP), and 319-339 (DAVA…DYYV).

This sequence belongs to the NqrB/RnfD family. The complex is composed of six subunits: RnfA, RnfB, RnfC, RnfD, RnfE and RnfG. FMN is required as a cofactor.

The protein localises to the cell inner membrane. In terms of biological role, part of a membrane-bound complex that couples electron transfer with translocation of ions across the membrane. The protein is Ion-translocating oxidoreductase complex subunit D of Shewanella frigidimarina (strain NCIMB 400).